Here is a 204-residue protein sequence, read N- to C-terminus: Large ribosomal subunit protein uL4 (204 aa).

Positions 42–52 (GTKAQKSRSQV) are enriched in polar residues. The segment at 42–70 (GTKAQKSRSQVSGTTKKSKKQKGGGARHG) is disordered.

This sequence belongs to the universal ribosomal protein uL4 family. In terms of assembly, part of the 50S ribosomal subunit.

Functionally, one of the primary rRNA binding proteins, this protein initially binds near the 5'-end of the 23S rRNA. It is important during the early stages of 50S assembly. It makes multiple contacts with different domains of the 23S rRNA in the assembled 50S subunit and ribosome. In terms of biological role, forms part of the polypeptide exit tunnel. This is Large ribosomal subunit protein uL4 from Xylella fastidiosa (strain M12).